The sequence spans 36 residues: Alpha-conotoxin-like Pu1.3 (36 aa).

Positions S1–K21 are excised as a propeptide. Cystine bridges form between C24/C30 and C25/C36.

It belongs to the conotoxin A superfamily. Expressed by the venom duct.

It is found in the secreted. Alpha-conotoxins act on postsynaptic membranes, they bind to the nicotinic acetylcholine receptors (nAChR) and thus inhibit them. This chain is Alpha-conotoxin-like Pu1.3, found in Conus pulicarius (Flea-bitten cone).